The chain runs to 1236 residues: DNA-directed RNA polymerase II subunit RPB2 (1236 aa).

Residue Asp846 participates in Mg(2+) binding. Zn(2+) contacts are provided by Cys1172, Cys1175, Cys1191, and Cys1194. A C4-type zinc finger spans residues 1172 to 1194 (CGVCGLMSVIANLKKNQFECRSC).

It belongs to the RNA polymerase beta chain family. As to quaternary structure, component of the RNA polymerase II (Pol II) complex consisting of 12 subunits.

It localises to the nucleus. It catalyses the reaction RNA(n) + a ribonucleoside 5'-triphosphate = RNA(n+1) + diphosphate. Its function is as follows. DNA-dependent RNA polymerase catalyzes the transcription of DNA into RNA using the four ribonucleoside triphosphates as substrates. Second largest component of RNA polymerase II which synthesizes mRNA precursors and many functional non-coding RNAs. Proposed to contribute to the polymerase catalytic activity and forms the polymerase active center together with the largest subunit. Pol II is the central component of the basal RNA polymerase II transcription machinery. It is composed of mobile elements that move relative to each other. RPB2 is part of the core element with the central large cleft, the clamp element that moves to open and close the cleft and the jaws that are thought to grab the incoming DNA template. This chain is DNA-directed RNA polymerase II subunit RPB2 (RPB2), found in Meyerozyma guilliermondii (strain ATCC 6260 / CBS 566 / DSM 6381 / JCM 1539 / NBRC 10279 / NRRL Y-324) (Yeast).